Consider the following 339-residue polypeptide: Anthranilate phosphoribosyltransferase (339 aa).

Residues glycine 81, 84–85 (GD), threonine 89, 91–94 (NVST), 109–117 (KHGNRSVSS), and serine 121 each bind 5-phospho-alpha-D-ribose 1-diphosphate. Position 81 (glycine 81) interacts with anthranilate. Position 93 (serine 93) interacts with Mg(2+). Position 112 (asparagine 112) interacts with anthranilate. Arginine 167 contacts anthranilate. 2 residues coordinate Mg(2+): aspartate 226 and glutamate 227.

The protein belongs to the anthranilate phosphoribosyltransferase family. As to quaternary structure, homodimer. Requires Mg(2+) as cofactor.

The catalysed reaction is N-(5-phospho-beta-D-ribosyl)anthranilate + diphosphate = 5-phospho-alpha-D-ribose 1-diphosphate + anthranilate. It functions in the pathway amino-acid biosynthesis; L-tryptophan biosynthesis; L-tryptophan from chorismate: step 2/5. Catalyzes the transfer of the phosphoribosyl group of 5-phosphorylribose-1-pyrophosphate (PRPP) to anthranilate to yield N-(5'-phosphoribosyl)-anthranilate (PRA). The chain is Anthranilate phosphoribosyltransferase from Persephonella marina (strain DSM 14350 / EX-H1).